Reading from the N-terminus, the 316-residue chain is MTEGMHSNVKEAIKILKELGLPKGQQNERSALCLLSLMNITQDKTWSEAESPLIGITPMMEFCRINYGKEYAPNSRETFRRFTMHQFVDAGIALYNPDKPTRPVNSPKAVYQIEAETLELIKCYNTEEWSELLARYLSNRQTLVERYAKERQQNKIPVQIAEGKEIYITPGEHSELIKAIIEEFAPRYVPGGRLIYAGDTGEKMGYFDEELLRQLGVVIDSHGKMPDVVIYFPEKKWLLLIESVTSHGPVDHKRHEELAKLFNGSTAGIVYVTAFPNRSLMARYLNNISWETEVWVADAPSHLIHFNGVRFLGPYE.

It belongs to the BsuBI/PstI type II restriction endonuclease family. In terms of assembly, homodimer. Mg(2+) is required as a cofactor.

The enzyme catalyses Endonucleolytic cleavage of DNA to give specific double-stranded fragments with terminal 5'-phosphates.. In terms of biological role, a P subtype restriction enzyme that recognizes the double-stranded sequence 5'-CTGCAG-3' and cleaves after A-5. This chain is Type II restriction enzyme BsuBI (hsdBR), found in Bacillus subtilis.